Consider the following 45-residue polypeptide: Metallothionein-like protein 1A (45 aa).

The protein belongs to the metallothionein superfamily. Type 15 family. In terms of tissue distribution, expressed in phloem and mesophyll cells of leaves, vascular tissues of cotyledons, sepals and petals. Expressed in anthers. Expressed in root endodermis and at lower levels in cortex of mature region of roots.

In terms of biological role, metallothioneins have a high content of cysteine residues that bind various heavy metals. Functions as a metal chelator of copper (Cu) and zinc (Zn). Plays a role in Cu homeostasis in the roots under elevated Cu concentration. Functions cooperatively with the phytochelatin synthase PCS1 to protect plants from Cu and cadmium (Cd) toxicity. Plays a role in Cu homeostasis, specifically in the remobilization of Cu from senescing leaves. The mobilization of Cu from internal sources is important for seed development. Confers tolerance to Cd and plays a role in Cd and Zn homeostasis. This chain is Metallothionein-like protein 1A (MT1A), found in Arabidopsis thaliana (Mouse-ear cress).